Consider the following 317-residue polypeptide: Annexin A13 (317 aa).

Gly2 carries N-myristoyl glycine lipidation. 4 Annexin repeats span residues 15-86 (FDAD…ALLD), 87-158 (RPNE…SLLQ), 170-242 (ELAG…TIVR), and 246-317 (DLEG…ALLH).

This sequence belongs to the annexin family. In terms of assembly, monomer and homodimer. Detected on the tips of microvilli in small intestine (at protein level).

It localises to the apical cell membrane. It is found in the cell membrane. The protein resides in the cytoplasmic vesicle. Functionally, binds to membranes enriched in phosphatidylserine or phosphatidylglycerol in a calcium-dependent manner. Half-maximal membrane binding requires about 60 uM calcium. Does not bind to membranes that lack phospholipids with an acidic headgroup. This is Annexin A13 (Anxa13) from Mus musculus (Mouse).